The chain runs to 260 residues: UPF0246 protein Bcen2424_2223 (260 aa).

Belongs to the UPF0246 family.

In Burkholderia cenocepacia (strain HI2424), this protein is UPF0246 protein Bcen2424_2223.